The primary structure comprises 601 residues: Elongation factor 4 (601 aa).

In terms of domain architecture, tr-type G spans 5–187 (SNIRNFSIIA…AIVERLPAPE (183 aa)). GTP is bound by residues 17–22 (DHGKST) and 134–137 (NKID).

Belongs to the TRAFAC class translation factor GTPase superfamily. Classic translation factor GTPase family. LepA subfamily.

The protein resides in the cell inner membrane. It carries out the reaction GTP + H2O = GDP + phosphate + H(+). Its function is as follows. Required for accurate and efficient protein synthesis under certain stress conditions. May act as a fidelity factor of the translation reaction, by catalyzing a one-codon backward translocation of tRNAs on improperly translocated ribosomes. Back-translocation proceeds from a post-translocation (POST) complex to a pre-translocation (PRE) complex, thus giving elongation factor G a second chance to translocate the tRNAs correctly. Binds to ribosomes in a GTP-dependent manner. This chain is Elongation factor 4, found in Oleidesulfovibrio alaskensis (strain ATCC BAA-1058 / DSM 17464 / G20) (Desulfovibrio alaskensis).